The following is a 181-amino-acid chain: Large ribosomal subunit protein uL16 (181 aa).

Belongs to the universal ribosomal protein uL16 family.

This is Large ribosomal subunit protein uL16 from Pyrococcus horikoshii (strain ATCC 700860 / DSM 12428 / JCM 9974 / NBRC 100139 / OT-3).